The following is a 332-amino-acid chain: MNPWRRYSWEIALAALLIFEILAFGVINPRLLDINVLLFSTSDFICIGIVALPLTMVIVSGGMDISFGSTIGLCAITLGVLFQLGMPLPLAIIITLLLGAICGLINAGLIIYTGVNPLVITLGTMYLFGGSALLLSGMAGATGYEGIGGFPTAFTDFANISFLGIPMPLIFFLVCCLFFWLLMHRTHMGRNVFLIGQSARVAQYSAIPVNRTLYTVYAMTGCASAIAAVLLVSYFGSARSDLGASFLMPAITAVVLGGANIYGGSGSIMGSALAALLVGFLQQGLQMAGVPNQISSALSGALLIVVVVGRSVSLHRHQILEWYSRRRNAHQA.

Transmembrane regions (helical) follow at residues 7–27 (YSWE…FGVI), 45–65 (ICIG…GMDI), 70–90 (TIGL…PLPL), 91–111 (AIII…GLII), 118–138 (LVIT…LSGM), 162–182 (FLGI…FWLL), 216–236 (VYAM…SYFG), 240–260 (SDLG…GGAN), 261–281 (IYGG…VGFL), and 288–308 (AGVP…VVVV).

The protein belongs to the binding-protein-dependent transport system permease family. AraH/RbsC subfamily. As to quaternary structure, the complex is composed of two ATP-binding proteins (LsrA), two transmembrane proteins (LsrC and LsrD) and a solute-binding protein (LsrB).

The protein localises to the cell inner membrane. Functionally, part of the ABC transporter complex LsrABCD involved in autoinducer 2 (AI-2) import. Probably responsible for the translocation of the substrate across the membrane. The polypeptide is Autoinducer 2 import system permease protein LsrD (lsrD) (Salmonella paratyphi A (strain ATCC 9150 / SARB42)).